The following is a 196-amino-acid chain: Ribosome-binding factor A (196 aa).

It belongs to the RbfA family. In terms of assembly, monomer. Binds 30S ribosomal subunits, but not 50S ribosomal subunits or 70S ribosomes.

Its subcellular location is the cytoplasm. Functionally, one of several proteins that assist in the late maturation steps of the functional core of the 30S ribosomal subunit. Associates with free 30S ribosomal subunits (but not with 30S subunits that are part of 70S ribosomes or polysomes). Required for efficient processing of 16S rRNA. May interact with the 5'-terminal helix region of 16S rRNA. The polypeptide is Ribosome-binding factor A (Tropheryma whipplei (strain TW08/27) (Whipple's bacillus)).